The chain runs to 315 residues: Transcription antitermination protein NusB (315 aa).

The interval Ser296–Asp315 is disordered. Basic and acidic residues predominate over residues Lys302–Asp315.

It belongs to the NusB family.

In terms of biological role, involved in transcription antitermination. Required for transcription of ribosomal RNA (rRNA) genes. Binds specifically to the boxA antiterminator sequence of the ribosomal RNA (rrn) operons. This chain is Transcription antitermination protein NusB, found in Psychrobacter cryohalolentis (strain ATCC BAA-1226 / DSM 17306 / VKM B-2378 / K5).